The sequence spans 276 residues: Diaminopimelate epimerase (276 aa).

Asn13, Gln46, and Asn66 together coordinate substrate. The Proton donor role is filled by Cys75. Substrate contacts are provided by residues 76-77 (GN), Asn159, Asn192, and 210-211 (ER). The active-site Proton acceptor is Cys219. 220-221 (GT) lines the substrate pocket.

This sequence belongs to the diaminopimelate epimerase family. As to quaternary structure, homodimer.

The protein resides in the cytoplasm. The enzyme catalyses (2S,6S)-2,6-diaminopimelate = meso-2,6-diaminopimelate. It functions in the pathway amino-acid biosynthesis; L-lysine biosynthesis via DAP pathway; DL-2,6-diaminopimelate from LL-2,6-diaminopimelate: step 1/1. Catalyzes the stereoinversion of LL-2,6-diaminopimelate (L,L-DAP) to meso-diaminopimelate (meso-DAP), a precursor of L-lysine and an essential component of the bacterial peptidoglycan. The protein is Diaminopimelate epimerase of Pseudoalteromonas translucida (strain TAC 125).